The following is a 419-amino-acid chain: Metacaspase-1A (419 aa).

The disordered stretch occupies residues 1–89 (MHHQQSSYGG…PPDQPVSFGQ (89 aa)). Positions 41–51 (NGYNSPQQNYG) are enriched in polar residues. Positions 59–71 (YQQQSAYQNSYNQ) are enriched in low complexity. Residues His190 and Cys246 contribute to the active site.

It belongs to the peptidase C14B family.

Its function is as follows. Involved in cell death (apoptosis). This Aspergillus oryzae (strain ATCC 42149 / RIB 40) (Yellow koji mold) protein is Metacaspase-1A (casA).